The chain runs to 131 residues: uncharacterized protein (131 aa).

This is an uncharacterized protein from Schizosaccharomyces pombe (strain 972 / ATCC 24843) (Fission yeast).